An 87-amino-acid polypeptide reads, in one-letter code: Small ribosomal subunit protein uS15c (87 aa).

It belongs to the universal ribosomal protein uS15 family. Part of the 30S ribosomal subunit.

It localises to the plastid. Its subcellular location is the chloroplast. The protein is Small ribosomal subunit protein uS15c (rps15) of Coffea arabica (Arabian coffee).